A 234-amino-acid chain; its full sequence is Nuclear ubiquitous casein and cyclin-dependent kinase substrate 1 (234 aa).

Residues 1 to 234 (MSRPVRNRKV…SEDEASSGED (234 aa)) are disordered. Tyrosine 13 is modified (phosphotyrosine). Phosphoserine occurs at positions 14 and 19. Tyrosine 26 is modified (phosphotyrosine). Basic residues predominate over residues 35 to 51 (KKIRSSPREAKNKRRSG). Phosphoserine occurs at positions 54, 58, 61, 73, 75, and 79. Residues 64-77 (KDVKTKKDDSHSAE) show a composition bias toward basic and acidic residues. The segment covering 91–100 (QQRQAASKAA) has biased composition (low complexity). Over residues 111–124 (VGSEEEPEEDDEAP) the composition is skewed to acidic residues. 4 positions are modified to phosphoserine: serine 113, serine 130, serine 132, and serine 144. The span at 132–145 (SDEDFLMEDDDDSD) shows a compositional bias: acidic residues. Over residues 149–174 (SKKKNKKMVKKSKPERKEKKMPKPRL) the composition is skewed to basic residues. Threonine 179 is subject to Phosphothreonine. Serine 181 carries the phosphoserine modification. Over residues 185–199 (GKAKVGRPTASKKSK) the composition is skewed to basic residues. A Phosphothreonine modification is found at threonine 202. Phosphoserine is present on residues serine 204, serine 214, serine 225, and serine 231. The span at 223–234 (EGSEDEASSGED) shows a compositional bias: acidic residues.

As to quaternary structure, does not interact with RAD51. Post-translationally, phosphorylated in an ATM-dependent manner in response to DNA damage. Phosphorylated by CDK1 and casein kinase.

The protein localises to the nucleus. Its subcellular location is the chromosome. Chromatin-associated protein involved in DNA repair by promoting homologous recombination (HR). Binds double-stranded DNA (dsDNA) and secondary DNA structures, such as D-loop structures, but with less affinity than RAD51AP1. The protein is Nuclear ubiquitous casein and cyclin-dependent kinase substrate 1 (Nucks1) of Mus musculus (Mouse).